A 145-amino-acid polypeptide reads, in one-letter code: Cystatin-like 1 (145 aa).

A signal peptide spans 1–19; the sequence is MGIGCWRNPLLLLIALVLS. One can recognise a Cystatin domain in the interval 37–115; it reads SKKNMNSTLN…KKLRKSLICE (79 aa). An N-linked (GlcNAc...) asparagine glycan is attached at asparagine 42. 2 disulfide bridges follow: cysteine 91/cysteine 101 and cysteine 114/cysteine 134.

It belongs to the cystatin family.

It localises to the secreted. This Homo sapiens (Human) protein is Cystatin-like 1 (CSTL1).